We begin with the raw amino-acid sequence, 232 residues long: Phosphatidylserine decarboxylase proenzyme (232 aa).

Ser190 serves as the catalytic Schiff-base intermediate with substrate; via pyruvic acid. At Ser190 the chain carries Pyruvic acid (Ser); by autocatalysis.

This sequence belongs to the phosphatidylserine decarboxylase family. PSD-A subfamily. In terms of assembly, heterodimer of a large membrane-associated beta subunit and a small pyruvoyl-containing alpha subunit. Pyruvate is required as a cofactor. In terms of processing, is synthesized initially as an inactive proenzyme. Formation of the active enzyme involves a self-maturation process in which the active site pyruvoyl group is generated from an internal serine residue via an autocatalytic post-translational modification. Two non-identical subunits are generated from the proenzyme in this reaction, and the pyruvate is formed at the N-terminus of the alpha chain, which is derived from the carboxyl end of the proenzyme. The post-translation cleavage follows an unusual pathway, termed non-hydrolytic serinolysis, in which the side chain hydroxyl group of the serine supplies its oxygen atom to form the C-terminus of the beta chain, while the remainder of the serine residue undergoes an oxidative deamination to produce ammonia and the pyruvoyl prosthetic group on the alpha chain.

It localises to the cell membrane. It catalyses the reaction a 1,2-diacyl-sn-glycero-3-phospho-L-serine + H(+) = a 1,2-diacyl-sn-glycero-3-phosphoethanolamine + CO2. It functions in the pathway phospholipid metabolism; phosphatidylethanolamine biosynthesis; phosphatidylethanolamine from CDP-diacylglycerol: step 2/2. Functionally, catalyzes the formation of phosphatidylethanolamine (PtdEtn) from phosphatidylserine (PtdSer). The chain is Phosphatidylserine decarboxylase proenzyme from Methylocella silvestris (strain DSM 15510 / CIP 108128 / LMG 27833 / NCIMB 13906 / BL2).